The chain runs to 368 residues: 1-deoxy-D-xylulose 5-phosphate reductoisomerase (368 aa).

NADPH is bound by residues T7, G8, S9, I10, G31, K32, N33, and N113. K114 contacts 1-deoxy-D-xylulose 5-phosphate. NADPH is bound at residue E115. D133 is a Mn(2+) binding site. S134, E135, S158, and H181 together coordinate 1-deoxy-D-xylulose 5-phosphate. E135 is a Mn(2+) binding site. NADPH is bound at residue G187. The 1-deoxy-D-xylulose 5-phosphate site is built by S194, N199, K200, and E203. Residue E203 coordinates Mn(2+).

The protein belongs to the DXR family. The cofactor is Mg(2+). It depends on Mn(2+) as a cofactor.

It catalyses the reaction 2-C-methyl-D-erythritol 4-phosphate + NADP(+) = 1-deoxy-D-xylulose 5-phosphate + NADPH + H(+). The protein operates within isoprenoid biosynthesis; isopentenyl diphosphate biosynthesis via DXP pathway; isopentenyl diphosphate from 1-deoxy-D-xylulose 5-phosphate: step 1/6. Its function is as follows. Catalyzes the NADPH-dependent rearrangement and reduction of 1-deoxy-D-xylulose-5-phosphate (DXP) to 2-C-methyl-D-erythritol 4-phosphate (MEP). This is 1-deoxy-D-xylulose 5-phosphate reductoisomerase from Helicobacter pylori (strain P12).